A 222-amino-acid polypeptide reads, in one-letter code: Arginine ABC transporter permease protein ArtM (222 aa).

The Periplasmic portion of the chain corresponds to 1-15 (MFEYLPELMKGLHTS). Residues 12-208 (LHTSLTLTVA…VVNGLLTLMM (197 aa)) form the ABC transmembrane type-1 domain. A helical membrane pass occupies residues 16–36 (LTLTVASLIVALILALIFTII). Over 37–49 (LTLKTPVLVWLVR) the chain is Cytoplasmic. Residues 50–70 (GYITLFTGTPLLVQIFLIYYG) traverse the membrane as a helical segment. Residues 71-79 (PGQFPTLQE) are Periplasmic-facing. The chain crosses the membrane as a helical span at residues 80 to 100 (YPALWHLLSEPWLCALIALSL). Residues 101 to 154 (NSAAYTTQLFYGAIRAIPEGQWQSCSALGMSKKDTLAILLPYAFKRSLSSYSNE) lie on the Cytoplasmic side of the membrane. A helical transmembrane segment spans residues 155–175 (VVLVFKSTSLAYTITLMEVMG). Over 176–186 (YSQLLYGRTYD) the chain is Periplasmic. A helical transmembrane segment spans residues 187–207 (VMVFGAAGIIYLVVNGLLTLM). Over 208–222 (MRLIERKALAFERRN) the chain is Cytoplasmic.

It belongs to the binding-protein-dependent transport system permease family. HisMQ subfamily. As to quaternary structure, the complex is composed of two ATP-binding proteins (ArtP), two transmembrane proteins (ArtM and ArtQ) and two solute-binding proteins (ArtJ and ArtI).

The protein localises to the cell inner membrane. Functionally, part of the ABC transporter complex ArtPIQMJ involved in arginine transport. Probably responsible for the translocation of the substrate across the membrane. The polypeptide is Arginine ABC transporter permease protein ArtM (artM) (Escherichia coli (strain K12)).